Consider the following 560-residue polypeptide: Nucleoprotein (560 aa).

A binding site for the cap structure m7GTP region spans residues 54 to 236 (LRKAKRSDAD…ITRDESAVNI (183 aa)). Polar residues predominate over residues 323–332 (GRSWDNTSVD). Residues 323–349 (GRSWDNTSVDLNPKPDPGPRAPEKNGQ) form a disordered region. Positions 380 and 382 each coordinate Mn(2+). Zn(2+) contacts are provided by E390, C497, H500, and C521. D525 contributes to the Mn(2+) binding site.

This sequence belongs to the arenaviridae nucleocapsid protein family. In terms of assembly, homomultimerizes to form the nucleocapsid. Binds to viral genomic RNA. Interacts with glycoprotein G2. Interacts with protein Z; this interaction probably directs the encapsidated genome to budding sites. Interacts with protein L; this interaction does not interfere with Z-L interaction. Interacts with host IKBKE (via Protein kinase domain); the interaction inhibits IKBKE kinase activity.

It localises to the virion. The protein resides in the host cytoplasm. Its function is as follows. Encapsidates the genome, protecting it from nucleases. The encapsidated genomic RNA is termed the nucleocapsid (NC). Serves as template for viral transcription and replication. The increased presence of protein N in host cell does not seem to trigger the switch from transcription to replication as observed in other negative strain RNA viruses. Through the interaction with host IKBKE, strongly inhibits the phosphorylation and nuclear translocation of host IRF3, a protein involved in interferon activation pathway, leading to the inhibition of interferon-beta and IRF3-dependent promoters activation. Also encodes a functional 3'-5' exoribonuclease that degrades preferentially dsRNA substrates and thereby participates in the suppression of interferon induction. This chain is Nucleoprotein, found in Cupixi mammarenavirus (isolate Rat/Brasil/BeAn 119303/1970) (CPXV).